The primary structure comprises 159 residues: Eukaryotic translation initiation factor 5A (159 aa).

Residue Lys-51 is modified to Hypusine.

This sequence belongs to the eIF-5A family. In terms of processing, lys-51 undergoes hypusination, a unique post-translational modification that consists in the addition of a butylamino group from spermidine to lysine side chain, leading to the formation of the unusual amino acid hypusine. eIF-5As are the only known proteins to undergo this modification, which is essential for their function.

Its subcellular location is the cytoplasm. In terms of biological role, translation factor that promotes translation elongation and termination, particularly upon ribosome stalling at specific amino acid sequence contexts. Binds between the exit (E) and peptidyl (P) site of the ribosome and promotes rescue of stalled ribosome: specifically required for efficient translation of polyproline-containing peptides as well as other motifs that stall the ribosome. Acts as a ribosome quality control (RQC) cofactor by joining the RQC complex to facilitate peptidyl transfer during CAT tailing step. Functions as a regulator of autophagy. This is Eukaryotic translation initiation factor 5A from Drosophila melanogaster (Fruit fly).